Consider the following 207-residue polypeptide: LPS-assembly lipoprotein LptE (207 aa).

Residues 1–19 (MRHRILMLLLGLAVLVTAG) form the signal peptide. Cys20 is lipidated: N-palmitoyl cysteine. Cys20 carries S-diacylglycerol cysteine lipidation.

This sequence belongs to the LptE lipoprotein family. As to quaternary structure, component of the lipopolysaccharide transport and assembly complex. Interacts with LptD.

It localises to the cell outer membrane. Its function is as follows. Together with LptD, is involved in the assembly of lipopolysaccharide (LPS) at the surface of the outer membrane. Required for the proper assembly of LptD. Binds LPS and may serve as the LPS recognition site at the outer membrane. The chain is LPS-assembly lipoprotein LptE from Yersinia enterocolitica serotype O:8 / biotype 1B (strain NCTC 13174 / 8081).